The following is a 108-amino-acid chain: Urease subunit gamma (108 aa).

The protein belongs to the urease gamma subunit family. In terms of assembly, heterotrimer of UreA (gamma), UreB (beta) and UreC (alpha) subunits. Three heterotrimers associate to form the active enzyme.

It localises to the cytoplasm. The enzyme catalyses urea + 2 H2O + H(+) = hydrogencarbonate + 2 NH4(+). It functions in the pathway nitrogen metabolism; urea degradation; CO(2) and NH(3) from urea (urease route): step 1/1. This chain is Urease subunit gamma, found in Haloquadratum walsbyi (strain DSM 16790 / HBSQ001).